The chain runs to 213 residues: Orotate phosphoribosyltransferase (213 aa).

A 5-phospho-alpha-D-ribose 1-diphosphate-binding site is contributed by K26. 34–35 (FF) is an orotate binding site. Residues 72–73 (YK), R99, K100, K103, H105, and 124–132 (DDVITAGTA) each bind 5-phospho-alpha-D-ribose 1-diphosphate. The orotate site is built by T128 and R156.

Belongs to the purine/pyrimidine phosphoribosyltransferase family. PyrE subfamily. Homodimer. Mg(2+) serves as cofactor.

The enzyme catalyses orotidine 5'-phosphate + diphosphate = orotate + 5-phospho-alpha-D-ribose 1-diphosphate. Its pathway is pyrimidine metabolism; UMP biosynthesis via de novo pathway; UMP from orotate: step 1/2. Catalyzes the transfer of a ribosyl phosphate group from 5-phosphoribose 1-diphosphate to orotate, leading to the formation of orotidine monophosphate (OMP). This is Orotate phosphoribosyltransferase from Yersinia enterocolitica serotype O:8 / biotype 1B (strain NCTC 13174 / 8081).